Consider the following 160-residue polypeptide: MSGQVTLQSSDQVNITVERAVAERSMLIKNLLEDLGESEEPVPIPNVNESVLKKVIEWCTHHKNDPQTTGEEDDNRRRTTEIDEWDQKFMQVDQEMLFEIILAANYLDIKALLDVGCKTVANMIKGKSPEEIRKTFNIQNDFTPEEEDQIRRENEWAEDR.

Residues 101 to 160 (ILAANYLDIKALLDVGCKTVANMIKGKSPEEIRKTFNIQNDFTPEEEDQIRRENEWAEDR) are interaction with the F-box domain of F-box proteins.

Belongs to the SKP1 family. As to quaternary structure, component of the SCF (SKP1-CUL1-F-box protein) E3 ubiquitin ligase complexes.

It participates in protein modification; protein ubiquitination. Essential component of the SCF (SKP1-CUL1-F-box protein) E3 ubiquitin ligase complexes, which mediate the ubiquitination and subsequent proteasomal degradation of target proteins. Controls sulfur metabolite repression, probably by mediating the inactivation or degradation of the metR transcription factor. In Talaromyces stipitatus (strain ATCC 10500 / CBS 375.48 / QM 6759 / NRRL 1006) (Penicillium stipitatum), this protein is E3 ubiquitin ligase complex SCF subunit sconC (sconC).